A 417-amino-acid polypeptide reads, in one-letter code: NADH-quinone oxidoreductase subunit D (417 aa).

It belongs to the complex I 49 kDa subunit family. In terms of assembly, NDH-1 is composed of 14 different subunits. Subunits NuoB, C, D, E, F, and G constitute the peripheral sector of the complex.

It localises to the cell inner membrane. It carries out the reaction a quinone + NADH + 5 H(+)(in) = a quinol + NAD(+) + 4 H(+)(out). NDH-1 shuttles electrons from NADH, via FMN and iron-sulfur (Fe-S) centers, to quinones in the respiratory chain. The immediate electron acceptor for the enzyme in this species is believed to be ubiquinone. Couples the redox reaction to proton translocation (for every two electrons transferred, four hydrogen ions are translocated across the cytoplasmic membrane), and thus conserves the redox energy in a proton gradient. This is NADH-quinone oxidoreductase subunit D from Cupriavidus metallidurans (strain ATCC 43123 / DSM 2839 / NBRC 102507 / CH34) (Ralstonia metallidurans).